The primary structure comprises 196 residues: Ribonuclease HII (196 aa).

The RNase H type-2 domain maps to 1 to 196; the sequence is MVTIGVDEAG…FAPVAQLQLL (196 aa). Residues aspartate 7, glutamate 8, and aspartate 103 each coordinate a divalent metal cation.

Belongs to the RNase HII family. Mn(2+) is required as a cofactor. It depends on Mg(2+) as a cofactor.

Its subcellular location is the cytoplasm. It carries out the reaction Endonucleolytic cleavage to 5'-phosphomonoester.. Its function is as follows. Endonuclease that specifically degrades the RNA of RNA-DNA hybrids. The chain is Ribonuclease HII from Novosphingobium aromaticivorans (strain ATCC 700278 / DSM 12444 / CCUG 56034 / CIP 105152 / NBRC 16084 / F199).